A 100-amino-acid polypeptide reads, in one-letter code: Urease subunit gamma (100 aa).

It belongs to the urease gamma subunit family. As to quaternary structure, heterotrimer of UreA (gamma), UreB (beta) and UreC (alpha) subunits. Three heterotrimers associate to form the active enzyme.

It is found in the cytoplasm. It carries out the reaction urea + 2 H2O + H(+) = hydrogencarbonate + 2 NH4(+). The protein operates within nitrogen metabolism; urea degradation; CO(2) and NH(3) from urea (urease route): step 1/1. The sequence is that of Urease subunit gamma from Haemophilus influenzae (strain 86-028NP).